The primary structure comprises 725 residues: Prolyl 3-hydroxylase 1 (725 aa).

The signal sequence occupies residues 1–14 (MALLLPLLPLLVWA). The stretch at 36 to 69 (PDALFAAGAEAYARGDWPAVVLQMERALRARAAI) is one TPR 1 repeat. Residue Asn82 is glycosylated (N-linked (GlcNAc...) asparagine). TPR repeat units lie at residues 136–169 (RSPY…NPEH), 198–231 (HMTE…YFVA), and 294–327 (PSHF…FPND). Positions 394–441 (KRLREKQKVERETAARISEEIGNLMKEIETLVEEKAKESAEMSKFIRE) form a coiled coil. Residues Asn460 and Asn533 are each glycosylated (N-linked (GlcNAc...) asparagine). A Fe2OG dioxygenase domain is found at 557 to 671 (SHLVCRTAID…RCAIALWFTL (115 aa)). Fe cation is bound by residues His580, Asp582, and His652. Arg662 is an active-site residue. Over residues 701–715 (ETSAEQEPTAATSTA) the composition is skewed to polar residues. Residues 701 to 725 (ETSAEQEPTAATSTAGLHAAGKDEL) form a disordered region. Positions 722–725 (KDEL) match the Prevents secretion from ER motif.

It belongs to the leprecan family. Binds unfolded collagen in a complex with CYPB and CRTAP. The cofactor is Fe cation. L-ascorbate serves as cofactor. Expressed in embryonic dermis, tendon, cartilage, liver and kidney. Expression in the kidney is restricted to the calyx. In the liver, expression is restricted to the interlobular septum.

It is found in the endoplasmic reticulum. The catalysed reaction is L-prolyl-[collagen] + 2-oxoglutarate + O2 = trans-3-hydroxy-L-prolyl-[collagen] + succinate + CO2. Functionally, has prolyl 3-hydroxylase activity catalyzing the post-translational formation of 3-hydroxyproline in -Xaa-Pro-Gly-sequences in collagens, especially types IV and V. May be involved in the secretoty pathway of cells. Has growth suppressive activity in fibroblasts. This Gallus gallus (Chicken) protein is Prolyl 3-hydroxylase 1.